The chain runs to 218 residues: Variable small protein 8 (218 aa).

An N-terminal signal peptide occupies residues 1–18; that stretch reads MRKRISAIIMTLFMVFMS. A lipid anchor (N-palmitoyl cysteine) is attached at cysteine 19. Cysteine 19 carries S-diacylglycerol cysteine lipidation.

It belongs to the variable small protein (Vsp) family.

It is found in the cell outer membrane. Functionally, the Vlp and Vsp proteins are antigenically distinct proteins, only one vlp or vsp gene is transcriptionally active at any one time. Switching between these genes is a mechanism of host immune response evasion. In Borrelia hermsii, this protein is Variable small protein 8.